Here is an 855-residue protein sequence, read N- to C-terminus: DNA mismatch repair protein MutS (855 aa).

An ATP-binding site is contributed by 616-623 (GPNMGGKS).

Belongs to the DNA mismatch repair MutS family.

Functionally, this protein is involved in the repair of mismatches in DNA. It is possible that it carries out the mismatch recognition step. This protein has a weak ATPase activity. The chain is DNA mismatch repair protein MutS from Salmonella gallinarum (strain 287/91 / NCTC 13346).